Reading from the N-terminus, the 541-residue chain is Membrane protein insertase YidC (541 aa).

Residues 6–26 traverse the membrane as a helical segment; sequence SLLVLALIFISFLVYQQWQLD. Residues 34–56 are disordered; the sequence is EQTTSITATSDVPASSPSNSQAI. 4 consecutive transmembrane segments (helical) span residues 337–357, 416–436, 454–474, and 495–515; these read FWLL…IICV, LGGC…YWTF, LSAQ…MFLL, and PLIF…YWLV.

The protein belongs to the OXA1/ALB3/YidC family. Type 1 subfamily. Interacts with the Sec translocase complex via SecD. Specifically interacts with transmembrane segments of nascent integral membrane proteins during membrane integration.

It is found in the cell inner membrane. In terms of biological role, required for the insertion and/or proper folding and/or complex formation of integral membrane proteins into the membrane. Involved in integration of membrane proteins that insert both dependently and independently of the Sec translocase complex, as well as at least some lipoproteins. Aids folding of multispanning membrane proteins. The polypeptide is Membrane protein insertase YidC (Haemophilus influenzae (strain PittEE)).